A 184-amino-acid polypeptide reads, in one-letter code: Large ribosomal subunit protein uL6 (184 aa).

Belongs to the universal ribosomal protein uL6 family. As to quaternary structure, part of the 50S ribosomal subunit.

This protein binds to the 23S rRNA, and is important in its secondary structure. It is located near the subunit interface in the base of the L7/L12 stalk, and near the tRNA binding site of the peptidyltransferase center. This chain is Large ribosomal subunit protein uL6, found in Thermomicrobium roseum (strain ATCC 27502 / DSM 5159 / P-2).